The sequence spans 121 residues: ATP synthase epsilon chain (121 aa).

Belongs to the ATPase epsilon chain family. In terms of assembly, F-type ATPases have 2 components, CF(1) - the catalytic core - and CF(0) - the membrane proton channel. CF(1) has five subunits: alpha(3), beta(3), gamma(1), delta(1), epsilon(1). CF(0) has three main subunits: a, b and c.

It is found in the cell membrane. Functionally, produces ATP from ADP in the presence of a proton gradient across the membrane. In Mycobacterium marinum (strain ATCC BAA-535 / M), this protein is ATP synthase epsilon chain.